The chain runs to 312 residues: uncharacterized protein (312 aa).

Active-site charge relay system residues include Ser-200, Asp-261, and His-292.

The protein belongs to the AB hydrolase superfamily. AB hydrolase 2 family.

This is an uncharacterized protein from Acanthamoeba polyphaga mimivirus (APMV).